Reading from the N-terminus, the 223-residue chain is Fibroblast growth factor-binding protein 2 (223 aa).

The N-terminal stretch at 1 to 19 (MKFVPCLLLVTLSCLGTLG) is a signal peptide. The tract at residues 23-45 (RQKQGSTGEEFHFQTGGRDSCTM) is disordered. Disulfide bonds link cysteine 43/cysteine 63, cysteine 72/cysteine 106, and cysteine 81/cysteine 117. Residues 120-201 (AGPQAHMQQV…PGGNEEAKKK (82 aa)) form a disordered region. Residues 125-144 (HMQQVTSSLKGSPEPNQQPE) show a composition bias toward polar residues. The segment covering 175-186 (AKPTTRPTAKPT) has biased composition (low complexity). A disulfide bond links cysteine 206 and cysteine 214.

The protein belongs to the fibroblast growth factor-binding protein family. As to expression, expressed in serum, peripheral leukocytes and cytotoxic T-lymphocytes, but not in granulocytes and monocytes (at protein level).

It localises to the secreted. The protein resides in the extracellular space. This Homo sapiens (Human) protein is Fibroblast growth factor-binding protein 2 (FGFBP2).